Consider the following 474-residue polypeptide: Salutaridinol 7-O-acetyltransferase (474 aa).

Histidine 163 functions as the Proton acceptor in the catalytic mechanism. The disordered stretch occupies residues glutamate 213–glutamate 234. Positions arginine 214–proline 230 are enriched in polar residues. Catalysis depends on aspartate 416, which acts as the Proton acceptor.

Belongs to the plant acyltransferase family. In terms of tissue distribution, expressed in root, stem, leaf and capsule of the mature plant. Restricted to sieve elements of the phloem adjacent or proximal to laticifers.

The catalysed reaction is (7S)-salutaridinol + acetyl-CoA = (7S)-O-acetylsalutaridinol + CoA. It functions in the pathway alkaloid biosynthesis; morphine biosynthesis. Its function is as follows. Acetyltransferase involved in biosynthesis of morphinan-type benzylisoquinoline and opiate alkaloids natural products. Catalyzes the conversion of the phenanthrene alkaloid salutaridinol to salutaridinol-7-O-acetate, the immediate precursor of thebaine along the morphine biosynthetic pathway. Conversion of 7-O-acetylsalutaridinol into thebaine is spontaneous. The polypeptide is Salutaridinol 7-O-acetyltransferase (Papaver somniferum (Opium poppy)).